Reading from the N-terminus, the 365-residue chain is Aminomethyltransferase (365 aa).

The protein belongs to the GcvT family. As to quaternary structure, the glycine cleavage system is composed of four proteins: P, T, L and H.

The enzyme catalyses N(6)-[(R)-S(8)-aminomethyldihydrolipoyl]-L-lysyl-[protein] + (6S)-5,6,7,8-tetrahydrofolate = N(6)-[(R)-dihydrolipoyl]-L-lysyl-[protein] + (6R)-5,10-methylene-5,6,7,8-tetrahydrofolate + NH4(+). The glycine cleavage system catalyzes the degradation of glycine. This chain is Aminomethyltransferase, found in Yersinia pseudotuberculosis serotype O:3 (strain YPIII).